The primary structure comprises 111 residues: Protein YibV (111 aa).

The sequence is that of Protein YibV (yibV) from Escherichia coli O157:H7.